The following is a 116-amino-acid chain: Large-conductance mechanosensitive channel (116 aa).

2 helical membrane passes run 7–27 (EFAL…GAAF) and 64–84 (GLFI…FIFV).

Belongs to the MscL family. In terms of assembly, homopentamer.

The protein resides in the cell membrane. Its function is as follows. Channel that opens in response to stretch forces in the membrane lipid bilayer. May participate in the regulation of osmotic pressure changes within the cell. In Staphylococcus epidermidis (strain ATCC 35984 / DSM 28319 / BCRC 17069 / CCUG 31568 / BM 3577 / RP62A), this protein is Large-conductance mechanosensitive channel.